We begin with the raw amino-acid sequence, 369 residues long: 4-hydroxy-3-methylbut-2-en-1-yl diphosphate synthase (flavodoxin) (369 aa).

Positions 268, 271, 303, and 310 each coordinate [4Fe-4S] cluster.

It belongs to the IspG family. [4Fe-4S] cluster serves as cofactor.

It carries out the reaction (2E)-4-hydroxy-3-methylbut-2-enyl diphosphate + oxidized [flavodoxin] + H2O + 2 H(+) = 2-C-methyl-D-erythritol 2,4-cyclic diphosphate + reduced [flavodoxin]. The protein operates within isoprenoid biosynthesis; isopentenyl diphosphate biosynthesis via DXP pathway; isopentenyl diphosphate from 1-deoxy-D-xylulose 5-phosphate: step 5/6. Converts 2C-methyl-D-erythritol 2,4-cyclodiphosphate (ME-2,4cPP) into 1-hydroxy-2-methyl-2-(E)-butenyl 4-diphosphate. In Exiguobacterium sibiricum (strain DSM 17290 / CCUG 55495 / CIP 109462 / JCM 13490 / 255-15), this protein is 4-hydroxy-3-methylbut-2-en-1-yl diphosphate synthase (flavodoxin).